The sequence spans 478 residues: Glutamyl-tRNA(Gln) amidotransferase subunit A (478 aa).

Catalysis depends on charge relay system residues lysine 72 and serine 147. The Acyl-ester intermediate role is filled by serine 171.

The protein belongs to the amidase family. GatA subfamily. In terms of assembly, heterotrimer of A, B and C subunits.

It carries out the reaction L-glutamyl-tRNA(Gln) + L-glutamine + ATP + H2O = L-glutaminyl-tRNA(Gln) + L-glutamate + ADP + phosphate + H(+). Its function is as follows. Allows the formation of correctly charged Gln-tRNA(Gln) through the transamidation of misacylated Glu-tRNA(Gln) in organisms which lack glutaminyl-tRNA synthetase. The reaction takes place in the presence of glutamine and ATP through an activated gamma-phospho-Glu-tRNA(Gln). In Saccharolobus solfataricus (strain ATCC 35092 / DSM 1617 / JCM 11322 / P2) (Sulfolobus solfataricus), this protein is Glutamyl-tRNA(Gln) amidotransferase subunit A.